Consider the following 268-residue polypeptide: Octanoyltransferase (268 aa).

The 189-residue stretch at 73–261 (GEADELVWLL…AFEEVFGPAV (189 aa)) folds into the BPL/LPL catalytic domain. Residues 112 to 119 (RGGEYTYH), 192 to 194 (ALG), and 205 to 207 (GLS) contribute to the substrate site. Cys223 acts as the Acyl-thioester intermediate in catalysis.

The protein belongs to the LipB family.

The protein resides in the cytoplasm. It carries out the reaction octanoyl-[ACP] + L-lysyl-[protein] = N(6)-octanoyl-L-lysyl-[protein] + holo-[ACP] + H(+). It participates in protein modification; protein lipoylation via endogenous pathway; protein N(6)-(lipoyl)lysine from octanoyl-[acyl-carrier-protein]: step 1/2. In terms of biological role, catalyzes the transfer of endogenously produced octanoic acid from octanoyl-acyl-carrier-protein onto the lipoyl domains of lipoate-dependent enzymes. Lipoyl-ACP can also act as a substrate although octanoyl-ACP is likely to be the physiological substrate. The protein is Octanoyltransferase of Agrobacterium fabrum (strain C58 / ATCC 33970) (Agrobacterium tumefaciens (strain C58)).